The chain runs to 116 residues: Large ribosomal subunit protein bL20 (116 aa).

This sequence belongs to the bacterial ribosomal protein bL20 family.

Binds directly to 23S ribosomal RNA and is necessary for the in vitro assembly process of the 50S ribosomal subunit. It is not involved in the protein synthesizing functions of that subunit. This Helicobacter pylori (strain Shi470) protein is Large ribosomal subunit protein bL20.